Consider the following 747-residue polypeptide: Elastin (747 aa).

The N-terminal stretch at 1–26 is a signal peptide; sequence MRSLTAAARRPEVLLLLLCILQPSQP. 3 positions are modified to 4-hydroxyproline: Pro-34, Pro-65, and Pro-87. 2 positions are modified to allysine: Lys-105 and Lys-109. 3 positions are modified to 4-hydroxyproline: Pro-165, Pro-178, and Pro-181. Pro-188 carries the post-translational modification Hydroxyproline. 4-hydroxyproline is present on Pro-201. Allysine is present on residues Lys-252, Lys-271, and Lys-275. 4-hydroxyproline is present on residues Pro-298 and Pro-302. An allysine mark is found at Lys-324 and Lys-327. Pro-335, Pro-365, Pro-370, Pro-375, Pro-380, and Pro-385 each carry 4-hydroxyproline. Allysine is present on residues Lys-400, Lys-404, Lys-407, Lys-445, and Lys-448. Pro-462 and Pro-478 each carry 4-hydroxyproline. Residues Lys-489 and Lys-493 each carry the allysine modification. Pro-513 carries the post-translational modification 4-hydroxyproline. Allysine is present on residues Lys-544, Lys-548, and Lys-552. 5 positions are modified to 4-hydroxyproline: Pro-566, Pro-575, Pro-584, Pro-593, and Pro-599. Lys-606 and Lys-609 each carry allysine. Pro-630 bears the 4-hydroxyproline mark. 4 positions are modified to allysine: Lys-645, Lys-649, Lys-685, and Lys-688. Pro-719 and Pro-733 each carry 4-hydroxyproline. A disulfide bond links Cys-737 and Cys-742.

It belongs to the elastin family. As to quaternary structure, the polymeric elastin chains are cross-linked together into an extensible 3D network. Forms a ternary complex with BGN and MFAP2. Interacts with MFAP2 via divalent cations (calcium &gt; magnesium &gt; manganese) in a dose-dependent and saturating manner. Interacts with FBLN5 and FBN1. Forms a ternary complex with FBN1 and FBLN2 or FBLN5. Interacts with MFAP4 in a Ca (2+)-dependent manner; this interaction promotes ELN self-assembly. Interacts with EFEMP2 with moderate affinity. Elastin is formed through the cross-linking of its soluble precursor tropoelastin. Cross-linking is initiated through the action of lysyl oxidase on exposed lysines to form allysine. Subsequent spontaneous condensation reactions with other allysine or unmodified lysine residues result in various bi-, tri-, and tetrafunctional cross-links. The most abundant cross-links in mature elastin fibers are lysinonorleucine, allysine aldol, desmosine, and isodesmosine. Post-translationally, hydroxylation on proline residues within the sequence motif, GXPG, is most likely to be 4-hydroxy as this fits the requirement for 4-hydroxylation in vertebrates.

The protein localises to the secreted. It is found in the extracellular space. The protein resides in the extracellular matrix. Its function is as follows. Major structural protein of tissues such as aorta and nuchal ligament, which must expand rapidly and recover completely. Molecular determinant of the late arterial morphogenesis, stabilizing arterial structure by regulating proliferation and organization of vascular smooth muscle. The sequence is that of Elastin (ELN) from Bos taurus (Bovine).